We begin with the raw amino-acid sequence, 331 residues long: Ketol-acid reductoisomerase (NADP(+)) (331 aa).

In terms of domain architecture, KARI N-terminal Rossmann spans 2–181 (LEKYYDKDAD…GATRAVVFET (180 aa)). Residues 25 to 28 (YGSQ), R48, S52, and 82 to 85 (DEQQ) contribute to the NADP(+) site. The active site involves H107. Residue G133 participates in NADP(+) binding. Residues 182 to 327 (SFREETETDL…KEIRATMPQF (146 aa)) form the KARI C-terminal knotted domain. 4 residues coordinate Mg(2+): D190, E194, E226, and E230. S251 lines the substrate pocket.

It belongs to the ketol-acid reductoisomerase family. Mg(2+) serves as cofactor.

The catalysed reaction is (2R)-2,3-dihydroxy-3-methylbutanoate + NADP(+) = (2S)-2-acetolactate + NADPH + H(+). It catalyses the reaction (2R,3R)-2,3-dihydroxy-3-methylpentanoate + NADP(+) = (S)-2-ethyl-2-hydroxy-3-oxobutanoate + NADPH + H(+). It functions in the pathway amino-acid biosynthesis; L-isoleucine biosynthesis; L-isoleucine from 2-oxobutanoate: step 2/4. Its pathway is amino-acid biosynthesis; L-valine biosynthesis; L-valine from pyruvate: step 2/4. In terms of biological role, involved in the biosynthesis of branched-chain amino acids (BCAA). Catalyzes an alkyl-migration followed by a ketol-acid reduction of (S)-2-acetolactate (S2AL) to yield (R)-2,3-dihydroxy-isovalerate. In the isomerase reaction, S2AL is rearranged via a Mg-dependent methyl migration to produce 3-hydroxy-3-methyl-2-ketobutyrate (HMKB). In the reductase reaction, this 2-ketoacid undergoes a metal-dependent reduction by NADPH to yield (R)-2,3-dihydroxy-isovalerate. The sequence is that of Ketol-acid reductoisomerase (NADP(+)) from Methanospirillum hungatei JF-1 (strain ATCC 27890 / DSM 864 / NBRC 100397 / JF-1).